A 192-amino-acid polypeptide reads, in one-letter code: RNA-free ribonuclease P (192 aa).

The protein belongs to the HARP family.

The enzyme catalyses Endonucleolytic cleavage of RNA, removing 5'-extranucleotides from tRNA precursor.. Its function is as follows. RNA-free RNase P that catalyzes the removal of the 5'-leader sequence from pre-tRNA to produce the mature 5'-terminus. This chain is RNA-free ribonuclease P, found in Alkalilimnicola ehrlichii (strain ATCC BAA-1101 / DSM 17681 / MLHE-1).